The chain runs to 757 residues: 17S U2 SnRNP complex component HTATSF1 (757 aa).

Disordered stretches follow at residues 1–54 and 80–123; these read MSGN…YEWD and SDGA…KAES. Ser-2 carries the N-acetylserine modification. The span at 80–94 shows a compositional bias: polar residues; the sequence is SDGASSSTANVQDAN. The span at 97–123 shows a compositional bias: basic and acidic residues; it reads AVEEPPQKEVPETPDSKRKGEKRKAES. RRM domains lie at 134–219 and 265–350; these read TNVY…VAKF and RVVI…AWDG. A U2AF homology motif (UHM) region spans residues 260–354; that stretch reads RLRHERVVIL…AQAWDGTTDY (95 aa). Residue Lys-298 is modified to N6-acetyllysine. The segment at 382–757 is mediates interaction with the P-TEFb complex; it reads GLRRMDSIAG…SSSDDDDDEV (376 aa). Residues 383-417 form a disordered region; that stretch reads LRRMDSIAGSERPGPSRMRHFSEHPSMSNMKAQEA. Phosphoserine occurs at positions 388, 404, 408, and 410. Polar residues predominate over residues 407 to 417; it reads PSMSNMKAQEA. Lys-431 is covalently cross-linked (Glycyl lysine isopeptide (Lys-Gly) (interchain with G-Cter in SUMO2)). The interval 432-757 is disordered; it reads FEKAEEGGES…SSSDDDDDEV (326 aa). Residues Ser-441, Ser-446, Ser-519, and Ser-528 each carry the phosphoserine modification. Basic and acidic residues-rich tracts occupy residues 445–483 and 497–538; these read ASEKDAKEGGSDGDHPEREGGEGCSKKENEEGCPERALE and GPER…KKES. Positions 539–551 are enriched in acidic residues; the sequence is EDDDSEEESEEDS. 2 stretches are compositionally biased toward basic and acidic residues: residues 552–585 and 595–609; these read SEKQSQDGSDKEIEENGVKKDVDQDVSDKEFPED and TDKSEFDEGSERVLD. Ser-556, Ser-560, Ser-578, Ser-598, Ser-604, Ser-613, Ser-621, Ser-645, Ser-679, Ser-705, Ser-724, and Ser-749 each carry phosphoserine. 3 stretches are compositionally biased toward acidic residues: residues 610–635, 643–671, and 678–688; these read EEGSEREFEEDSDEKEEEGDDDEEEV, DDSDDIEEEEEADEKECEDADDKEEDNDI, and DSDEKEDEEDT. Composition is skewed to basic and acidic residues over residues 689-709 and 716-737; these read DGKKDDDASDKVFEDNSNEKL and PNEKLFDDSDERGTVGNVKEDG. Residues 738-749 are compositionally biased toward low complexity; the sequence is SQSTDSSFALSS.

It belongs to the HTATSF1 family. In terms of assembly, component of the 17S U2 SnRNP complex, a ribonucleoprotein complex that contains small nuclear RNA (snRNA) U2 and a number of specific proteins. Within the 17S U2 SnRNP complex, interacts (via UHM region) directly with SF3B1. Component of a complex which is at least composed of HTATSF1/Tat-SF1, the P-TEFb complex components CDK9 and CCNT1, RNA polymerase II, SUPT5H, and NCL/nucleolin. Interacts with GTF2F2/RAP30 and POLR2A. Interacts with TCERG1/CA150. Interacts with (poly-ADP-ribosylated) RPA1; promoting HTATSF1 recruitment to DNA damage sites. Interacts (when phosphorylated) with TOPBP1; promoting recruitment of TOPBP1 to DNA damage sites during S-phase. Post-translationally, phosphorylation at Ser-749 by CK2 during S-phase in response to DNA damage promotes interaction with TOPBP1 and double-strand break (DSB) repair via homologous recombination.

The protein resides in the nucleus. The protein localises to the chromosome. Its function is as follows. Component of the 17S U2 SnRNP complex of the spliceosome, a large ribonucleoprotein complex that removes introns from transcribed pre-mRNAs. The 17S U2 SnRNP complex (1) directly participates in early spliceosome assembly and (2) mediates recognition of the intron branch site during pre-mRNA splicing by promoting the selection of the pre-mRNA branch-site adenosine, the nucleophile for the first step of splicing. Within the 17S U2 SnRNP complex, HTATSF1 is required to stabilize the branchpoint-interacting stem loop. HTATSF1 is displaced from the 17S U2 SnRNP complex before the stable addition of the 17S U2 SnRNP complex to the spliceosome, destabilizing the branchpoint-interacting stem loop and allowing to probe intron branch site sequences. Also acts as a regulator of transcriptional elongation, possibly by mediating the reciprocal stimulatory effect of splicing on transcriptional elongation. Involved in double-strand break (DSB) repair via homologous recombination in S-phase by promoting the recruitment of TOPBP1 to DNA damage sites. Mechanistically, HTATSF1 is (1) recruited to DNA damage sites in S-phase via interaction with poly-ADP-ribosylated RPA1 and (2) phosphorylated by CK2, promoting recruitment of TOPBP1, thereby facilitating RAD51 nucleofilaments formation and RPA displacement, followed by homologous recombination. In Mus musculus (Mouse), this protein is 17S U2 SnRNP complex component HTATSF1 (Htatsf1).